We begin with the raw amino-acid sequence, 61 residues long: Large ribosomal subunit protein uL30 (61 aa).

It belongs to the universal ribosomal protein uL30 family. As to quaternary structure, part of the 50S ribosomal subunit.

The chain is Large ribosomal subunit protein uL30 from Colwellia psychrerythraea (strain 34H / ATCC BAA-681) (Vibrio psychroerythus).